The following is a 148-amino-acid chain: Large ribosomal subunit protein bL9 (148 aa).

The protein belongs to the bacterial ribosomal protein bL9 family.

Its function is as follows. Binds to the 23S rRNA. The polypeptide is Large ribosomal subunit protein bL9 (Chloroflexus aurantiacus (strain ATCC 29366 / DSM 635 / J-10-fl)).